Reading from the N-terminus, the 100-residue chain is Putative sodium channel toxin Ts26 (100 aa).

The first 22 residues, 1 to 22, serve as a signal peptide directing secretion; the sequence is MVKSAMKIVILILFVLLIRVES. The LCN-type CS-alpha/beta domain occupies 24 to 92; the sequence is RNGYPDISDG…VMDTTIEYCE (69 aa). Disulfide bonds link C38–C64, C50–C69, C54–C71, and C65–C91.

It belongs to the long (4 C-C) scorpion toxin superfamily. Sodium channel inhibitor family. Expressed by the venom gland.

The protein resides in the secreted. Putative sodium channel toxin. The protein is Putative sodium channel toxin Ts26 of Tityus serrulatus (Brazilian scorpion).